The primary structure comprises 358 residues: Ribosomal RNA-processing protein 8 (358 aa).

The segment at 1 to 81 is disordered; sequence MKPFEVPPWE…PQDSSDDDYE (81 aa). The segment covering 30 to 44 has biased composition (basic residues); it reads AKKKPKKKKPKKKKA. Residues Ser75 and Ser76 each carry the phosphoserine modification. S-adenosyl-L-methionine is bound by residues His185, Gly220, Asp238, and Cys267.

It belongs to the methyltransferase superfamily. RRP8 family.

Its subcellular location is the nucleus. It is found in the nucleolus. Its function is as follows. Probable methyltransferase required to silence rDNA. The polypeptide is Ribosomal RNA-processing protein 8 (Drosophila melanogaster (Fruit fly)).